The sequence spans 142 residues: Large ribosomal subunit protein uL11 (142 aa).

Belongs to the universal ribosomal protein uL11 family. As to quaternary structure, part of the ribosomal stalk of the 50S ribosomal subunit. Interacts with L10 and the large rRNA to form the base of the stalk. L10 forms an elongated spine to which L12 dimers bind in a sequential fashion forming a multimeric L10(L12)X complex. In terms of processing, one or more lysine residues are methylated.

Functionally, forms part of the ribosomal stalk which helps the ribosome interact with GTP-bound translation factors. The polypeptide is Large ribosomal subunit protein uL11 (Xanthomonas oryzae pv. oryzae (strain MAFF 311018)).